Here is a 394-residue protein sequence, read N- to C-terminus: Elongation factor Tu (394 aa).

Positions 10–204 (KPHLNVGTIG…ALDTYIPLPE (195 aa)) constitute a tr-type G domain. Residues 19–26 (GHVDHGKT) form a G1 region. A GTP-binding site is contributed by 19-26 (GHVDHGKT). Threonine 26 lines the Mg(2+) pocket. The G2 stretch occupies residues 60 to 64 (GITIN). Residues 81–84 (DCPG) are G3. GTP is bound by residues 81–85 (DCPGH) and 136–139 (NKCD). Positions 136 to 139 (NKCD) are G4. Residues 174-176 (SAL) are G5.

Belongs to the TRAFAC class translation factor GTPase superfamily. Classic translation factor GTPase family. EF-Tu/EF-1A subfamily. Monomer.

It localises to the cytoplasm. The enzyme catalyses GTP + H2O = GDP + phosphate + H(+). In terms of biological role, GTP hydrolase that promotes the GTP-dependent binding of aminoacyl-tRNA to the A-site of ribosomes during protein biosynthesis. The chain is Elongation factor Tu from Psychromonas ingrahamii (strain DSM 17664 / CCUG 51855 / 37).